The sequence spans 211 residues: tRNA (guanine-N(7)-)-methyltransferase (211 aa).

Positions 44, 69, 96, and 118 each coordinate S-adenosyl-L-methionine. Residue D118 is part of the active site. K122 is a binding site for substrate. The interaction with RNA stretch occupies residues 124–129; that stretch reads RHEKRR. Substrate contacts are provided by residues D154 and 191–194; that span reads TEYE.

The protein belongs to the class I-like SAM-binding methyltransferase superfamily. TrmB family.

The enzyme catalyses guanosine(46) in tRNA + S-adenosyl-L-methionine = N(7)-methylguanosine(46) in tRNA + S-adenosyl-L-homocysteine. It participates in tRNA modification; N(7)-methylguanine-tRNA biosynthesis. In terms of biological role, catalyzes the formation of N(7)-methylguanine at position 46 (m7G46) in tRNA. This chain is tRNA (guanine-N(7)-)-methyltransferase, found in Streptococcus pneumoniae (strain Taiwan19F-14).